The sequence spans 493 residues: 3-octaprenyl-4-hydroxybenzoate carboxy-lyase (493 aa).

Position 172 (N172) interacts with Mn(2+). Prenylated FMN is bound by residues 175 to 177 (IYR), 189 to 191 (RWL), and 194 to 195 (RG). Mn(2+) is bound at residue E238. The Proton donor role is filled by D287.

The protein belongs to the UbiD family. As to quaternary structure, homohexamer. Prenylated FMN is required as a cofactor. It depends on Mn(2+) as a cofactor.

It is found in the cell membrane. It carries out the reaction a 4-hydroxy-3-(all-trans-polyprenyl)benzoate + H(+) = a 2-(all-trans-polyprenyl)phenol + CO2. Its pathway is cofactor biosynthesis; ubiquinone biosynthesis. Catalyzes the decarboxylation of 3-octaprenyl-4-hydroxy benzoate to 2-octaprenylphenol, an intermediate step in ubiquinone biosynthesis. The chain is 3-octaprenyl-4-hydroxybenzoate carboxy-lyase from Shewanella putrefaciens (strain CN-32 / ATCC BAA-453).